We begin with the raw amino-acid sequence, 220 residues long: Translation initiation factor IF-3 (220 aa).

The tract at residues 182–220 is disordered; it reads TPLVKKDDKEEPATRAVRTITAPPRPTSARLASKPAGNG. Positions 185–194 are enriched in basic and acidic residues; sequence VKKDDKEEPA.

The protein belongs to the IF-3 family. In terms of assembly, monomer.

Its subcellular location is the cytoplasm. IF-3 binds to the 30S ribosomal subunit and shifts the equilibrium between 70S ribosomes and their 50S and 30S subunits in favor of the free subunits, thus enhancing the availability of 30S subunits on which protein synthesis initiation begins. The polypeptide is Translation initiation factor IF-3 (Synechococcus sp. (strain WH7803)).